The primary structure comprises 271 residues: Plasmanylethanolamine desaturase 1 (271 aa).

A run of 3 helical transmembrane segments spans residues 48–68 (WCCV…LLLL), 75–95 (PLVM…SGLV), and 162–182 (VLEQ…FGTF). The Histidine box-1 motif lies at 187-191 (HKWSH). The short motif at 214 to 218 (HHRIH) is the Histidine box-2 element.

This sequence belongs to the fatty acid desaturase CarF family.

The protein resides in the endoplasmic reticulum membrane. It carries out the reaction a 1-(1,2-saturated alkyl)-2-acyl-sn-glycero-3-phosphoethanolamine + 2 Fe(II)-[cytochrome b5] + O2 + 2 H(+) = a 1-O-(1Z-alkenyl)-2-acyl-sn-glycero-3-phosphoethanolamine + 2 Fe(III)-[cytochrome b5] + 2 H2O. The enzyme catalyses a 1-O-hexadecyl-2-acyl-sn-glycero-3-phosphoethanolamine + 2 Fe(II)-[cytochrome b5] + O2 + 2 H(+) = a 1-O-(1Z-hexadecenyl)-2-acyl-sn-glycero-3-phosphoethanolamine + 2 Fe(III)-[cytochrome b5] + 2 H2O. It catalyses the reaction a 1-O-octadecyl-2-acyl-sn-glycero-3-phosphoethanolamine + 2 Fe(II)-[cytochrome b5] + O2 + 2 H(+) = a 1-O-(1Z-octadecenyl)-2-acyl-sn-glycero-3-phosphoethanolamine + 2 Fe(III)-[cytochrome b5] + 2 H2O. The catalysed reaction is a 1-O-(9Z-octadecenyl)-2-acyl-sn-glycero-3-phosphoethanolamine + 2 Fe(II)-[cytochrome b5] + O2 + 2 H(+) = a 1-O-(1Z,9Z-octadecadienyl)-2-acyl-sn-glycero-3-phosphoethanolamine + 2 Fe(III)-[cytochrome b5] + 2 H2O. Its pathway is lipid metabolism; fatty acid metabolism. Functionally, plasmanylethanolamine desaturase involved in plasmalogen biogenesis in the endoplasmic reticulum membrane. Plasmalogens are glycerophospholipids with a hydrocarbon chain linked by a vinyl ether bond at the glycerol sn-1 position, and are involved in antioxidative and signaling mechanisms. The chain is Plasmanylethanolamine desaturase 1 from Bos taurus (Bovine).